Consider the following 359-residue polypeptide: POU domain, class 5, transcription factor 1B (359 aa).

2 disordered regions span residues 1-53 (MAGH…GVGP) and 87-116 (QGGL…EPCT). The residue at position 111 (serine 111) is a Phosphoserine. The POU-specific domain maps to 138-212 (DIKALQKELE…LLQKWVEEAD (75 aa)). Positions 229–288 (ARKRKRTSIENRVRGNLENLFLQCPKPTLQISHIAQQLGLEKDVVRVWFCNRRQKGKRSS) form a DNA-binding region, homeobox. Threonine 235 is modified (phosphothreonine). 3 positions are modified to phosphoserine: serine 236, serine 288, and serine 289. Residues 287–322 (SSSDYAQREDFEAAGSPFSGGPVSFPPAPGPHFGTP) are disordered. The span at 299–309 (AAGSPFSGGPV) shows a compositional bias: low complexity. Residue serine 354 is modified to Phosphoserine.

It belongs to the POU transcription factor family. Class-5 subfamily. As to expression, detected in epithelial cells of the prostate (at protein level). Detected at the mRNA level in several cancer tissues (breast, uterine cervix, lung, thyroid gland, esophagus, colon, urinary bladder, and glioma).

The protein localises to the nucleus. The protein resides in the cytoplasm. Functionally, shows weak transcriptional activator activity. This chain is POU domain, class 5, transcription factor 1B (POU5F1B), found in Homo sapiens (Human).